The primary structure comprises 181 residues: Caltractin ICL1d (181 aa).

The tract at residues 1–29 is disordered; the sequence is MARRGQQPPPQQAPPAQKNQTGKFNPAEF. EF-hand domains follow at residues 37–72, 73–108, 110–145, and 146–181; these read EEVL…LGFE, AKNQ…RISE, DSKA…LGET, and MDDS…KTFA. Ca(2+) is bound by residues Asp-50, Asp-52, Thr-54, Ser-56, Glu-61, Asp-86, Asp-88, Ser-90, Gln-92, and Glu-97.

The protein belongs to the centrin family. Monomer.

It localises to the cytoplasm. It is found in the cytoskeleton. Its function is as follows. Plays a fundamental role in microtubule organizing center structure and function. Component of the infraciliary lattice (ICL) and the ciliary basal bodies. The protein is Caltractin ICL1d (Icl1d) of Paramecium tetraurelia.